The chain runs to 127 residues: Small ribosomal subunit protein uS11 (127 aa).

It belongs to the universal ribosomal protein uS11 family. As to quaternary structure, part of the 30S ribosomal subunit. Interacts with proteins S7 and S18. Binds to IF-3.

Its function is as follows. Located on the platform of the 30S subunit, it bridges several disparate RNA helices of the 16S rRNA. Forms part of the Shine-Dalgarno cleft in the 70S ribosome. This chain is Small ribosomal subunit protein uS11, found in Anaeromyxobacter sp. (strain Fw109-5).